The primary structure comprises 140 residues: Nucleoside diphosphate kinase (140 aa).

ATP-binding residues include K11, F59, R87, T93, R104, and N114. H117 acts as the Pros-phosphohistidine intermediate in catalysis.

Belongs to the NDK family. In terms of assembly, homotetramer. It depends on Mg(2+) as a cofactor.

Its subcellular location is the cytoplasm. It catalyses the reaction a 2'-deoxyribonucleoside 5'-diphosphate + ATP = a 2'-deoxyribonucleoside 5'-triphosphate + ADP. The enzyme catalyses a ribonucleoside 5'-diphosphate + ATP = a ribonucleoside 5'-triphosphate + ADP. Functionally, major role in the synthesis of nucleoside triphosphates other than ATP. The ATP gamma phosphate is transferred to the NDP beta phosphate via a ping-pong mechanism, using a phosphorylated active-site intermediate. The protein is Nucleoside diphosphate kinase of Roseobacter denitrificans (strain ATCC 33942 / OCh 114) (Erythrobacter sp. (strain OCh 114)).